The chain runs to 125 residues: Large ribosomal subunit protein bL12 (125 aa).

It belongs to the bacterial ribosomal protein bL12 family. As to quaternary structure, homodimer. Part of the ribosomal stalk of the 50S ribosomal subunit. Forms a multimeric L10(L12)X complex, where L10 forms an elongated spine to which 2 to 4 L12 dimers bind in a sequential fashion. Binds GTP-bound translation factors.

In terms of biological role, forms part of the ribosomal stalk which helps the ribosome interact with GTP-bound translation factors. Is thus essential for accurate translation. The sequence is that of Large ribosomal subunit protein bL12 from Porphyromonas gingivalis (strain ATCC 33277 / DSM 20709 / CIP 103683 / JCM 12257 / NCTC 11834 / 2561).